A 427-amino-acid chain; its full sequence is Trigger factor (427 aa).

A PPIase FKBP-type domain is found at 163–248; sequence GDTVVIDFVG…IHEVKTKEVP (86 aa).

Belongs to the FKBP-type PPIase family. Tig subfamily.

It is found in the cytoplasm. It catalyses the reaction [protein]-peptidylproline (omega=180) = [protein]-peptidylproline (omega=0). In terms of biological role, involved in protein export. Acts as a chaperone by maintaining the newly synthesized protein in an open conformation. Functions as a peptidyl-prolyl cis-trans isomerase. This Streptococcus agalactiae serotype Ia (strain ATCC 27591 / A909 / CDC SS700) protein is Trigger factor.